Consider the following 342-residue polypeptide: tRNA N6-adenosine threonylcarbamoyltransferase (342 aa).

Residues histidine 114 and histidine 118 each coordinate Fe cation. Residues 136–140 (LVSGG), aspartate 169, glycine 182, aspartate 186, and asparagine 275 each bind substrate. Aspartate 301 serves as a coordination point for Fe cation.

It belongs to the KAE1 / TsaD family. Requires Fe(2+) as cofactor.

The protein resides in the cytoplasm. The catalysed reaction is L-threonylcarbamoyladenylate + adenosine(37) in tRNA = N(6)-L-threonylcarbamoyladenosine(37) in tRNA + AMP + H(+). Required for the formation of a threonylcarbamoyl group on adenosine at position 37 (t(6)A37) in tRNAs that read codons beginning with adenine. Is involved in the transfer of the threonylcarbamoyl moiety of threonylcarbamoyl-AMP (TC-AMP) to the N6 group of A37, together with TsaE and TsaB. TsaD likely plays a direct catalytic role in this reaction. The sequence is that of tRNA N6-adenosine threonylcarbamoyltransferase from Streptococcus pyogenes serotype M4 (strain MGAS10750).